A 294-amino-acid polypeptide reads, in one-letter code: ATP phosphoribosyltransferase (294 aa).

It belongs to the ATP phosphoribosyltransferase family. Long subfamily. Requires Mg(2+) as cofactor.

The protein localises to the cytoplasm. It catalyses the reaction 1-(5-phospho-beta-D-ribosyl)-ATP + diphosphate = 5-phospho-alpha-D-ribose 1-diphosphate + ATP. It functions in the pathway amino-acid biosynthesis; L-histidine biosynthesis; L-histidine from 5-phospho-alpha-D-ribose 1-diphosphate: step 1/9. With respect to regulation, feedback inhibited by histidine. Its function is as follows. Catalyzes the condensation of ATP and 5-phosphoribose 1-diphosphate to form N'-(5'-phosphoribosyl)-ATP (PR-ATP). Has a crucial role in the pathway because the rate of histidine biosynthesis seems to be controlled primarily by regulation of HisG enzymatic activity. This Pelodictyon phaeoclathratiforme (strain DSM 5477 / BU-1) protein is ATP phosphoribosyltransferase.